A 350-amino-acid chain; its full sequence is Putative deoxyribonuclease-2 (350 aa).

This sequence belongs to the DNase II family.

This is Putative deoxyribonuclease-2 from Burkholderia thailandensis (strain ATCC 700388 / DSM 13276 / CCUG 48851 / CIP 106301 / E264).